The chain runs to 457 residues: Pup--protein ligase (457 aa).

Mg(2+) is bound at residue E9. Residue R53 participates in ATP binding. Y55 lines the Mg(2+) pocket. D57 (proton acceptor) is an active-site residue. E63 provides a ligand contact to Mg(2+). T66 and W424 together coordinate ATP.

The protein belongs to the Pup ligase/Pup deamidase family. Pup-conjugating enzyme subfamily.

It carries out the reaction ATP + [prokaryotic ubiquitin-like protein]-L-glutamate + [protein]-L-lysine = ADP + phosphate + N(6)-([prokaryotic ubiquitin-like protein]-gamma-L-glutamyl)-[protein]-L-lysine.. It functions in the pathway protein degradation; proteasomal Pup-dependent pathway. It participates in protein modification; protein pupylation. In terms of biological role, catalyzes the covalent attachment of the prokaryotic ubiquitin-like protein modifier Pup to the proteasomal substrate proteins, thereby targeting them for proteasomal degradation. This tagging system is termed pupylation. The ligation reaction involves the side-chain carboxylate of the C-terminal glutamate of Pup and the side-chain amino group of a substrate lysine. The chain is Pup--protein ligase from Xylanimonas cellulosilytica (strain DSM 15894 / JCM 12276 / CECT 5975 / KCTC 9989 / LMG 20990 / NBRC 107835 / XIL07).